The chain runs to 445 residues: Rab GDP dissociation inhibitor beta (445 aa).

Met1 carries the post-translational modification N-acetylmethionine. Position 112 is an N6-acetyllysine (Lys112). Ser130 carries the post-translational modification Phosphoserine. Lys269 is subject to N6-acetyllysine. Ser382 carries the phosphoserine modification.

This sequence belongs to the Rab GDI family. In terms of assembly, interacts with RHOH. Interacts with the GDP-bound inactive forms of RAB3A, RAB3B, RAB3C, RAB5A, RAB5B, RAB5C, RAB8A, RAB8B, RAB10, RAB12, RAB35, and RAB43; binds RAB3D to a lesser extent. Interacts with DZIP1; this interaction negatively regulates the interaction of GDI2 with GDP-bound RAB8A.

The protein localises to the cytoplasm. It is found in the membrane. It localises to the golgi apparatus. The protein resides in the trans-Golgi network. Its function is as follows. GDP-dissociation inhibitor preventing the GDP to GTP exchange of most Rab proteins. By keeping these small GTPases in their inactive GDP-bound form regulates intracellular membrane trafficking. Negatively regulates protein transport to the cilium and ciliogenesis through the inhibition of RAB8A. This is Rab GDP dissociation inhibitor beta (GDI2) from Sus scrofa (Pig).